Consider the following 420-residue polypeptide: Senescence-associated protein SPA15, chloroplastic (420 aa).

The transit peptide at 1-68 directs the protein to the chloroplast; sequence MAKPNGIIYS…YIATRGSSLR (68 aa). The tract at residues 85 to 111 is disordered; that stretch reads EYRDSSDTSSMQGKDKDPASLGKSGTP.

This sequence belongs to the ATA15/OSA15 family. As to expression, expressed in leaves.

Its subcellular location is the plastid. It localises to the chloroplast. In terms of biological role, may be involved in the regulation of leaf senescence. The sequence is that of Senescence-associated protein SPA15, chloroplastic from Ipomoea batatas (Sweet potato).